We begin with the raw amino-acid sequence, 57 residues long: UPF0391 membrane protein RPA3505 (57 aa).

Helical transmembrane passes span 4–24 (WVVT…GGIA) and 30–50 (IAKI…VISI).

It belongs to the UPF0391 family.

The protein localises to the cell membrane. The polypeptide is UPF0391 membrane protein RPA3505 (Rhodopseudomonas palustris (strain ATCC BAA-98 / CGA009)).